The following is a 63-amino-acid chain: Large ribosomal subunit protein bL28 (63 aa).

The protein belongs to the bacterial ribosomal protein bL28 family.

The polypeptide is Large ribosomal subunit protein bL28 (Petrotoga mobilis (strain DSM 10674 / SJ95)).